The primary structure comprises 390 residues: Trehalose-phosphate phosphatase (390 aa).

The active-site Nucleophile is aspartate 150. Residues aspartate 150, aspartate 152, and aspartate 333 each contribute to the Mg(2+) site. 150–152 (DFD) serves as a coordination point for substrate.

Belongs to the trehalose phosphatase family. Requires Mg(2+) as cofactor.

The enzyme catalyses alpha,alpha-trehalose 6-phosphate + H2O = alpha,alpha-trehalose + phosphate. It functions in the pathway glycan biosynthesis; trehalose biosynthesis. Removes the phosphate from trehalose 6-phosphate to produce free trehalose. This chain is Trehalose-phosphate phosphatase (otsB), found in Mycobacterium marinum (strain ATCC BAA-535 / M).